Consider the following 254-residue polypeptide: Cyclin homolog (254 aa).

It belongs to the cyclin family. Cyclin D subfamily.

Functionally, may be highly relevant to the process of cellular transformation and rapid T-cell proliferation effected by HVS during latent infections of T-cells in susceptible hosts. This Saimiriine herpesvirus 2 (strain 11) (SaHV-2) protein is Cyclin homolog (72).